The sequence spans 156 residues: Small ribosomal subunit protein uS7 (156 aa).

The protein belongs to the universal ribosomal protein uS7 family. As to quaternary structure, part of the 30S ribosomal subunit. Contacts proteins S9 and S11.

Its function is as follows. One of the primary rRNA binding proteins, it binds directly to 16S rRNA where it nucleates assembly of the head domain of the 30S subunit. Is located at the subunit interface close to the decoding center, probably blocks exit of the E-site tRNA. In Clostridium botulinum (strain 657 / Type Ba4), this protein is Small ribosomal subunit protein uS7.